Consider the following 2028-residue polypeptide: MEALTELCDIIAKNPKQFSEKLAWICGRCPQTEWLLAESPRVSRSHLNAVLAVARIISKNPESIDNRAKSVVNEFLSAIPASFRRSFWPHSFPSQLISSFYCDFLSYLSCAADLSPEFGTEVARFTGEVVIAAIAPSSGDSDGDPAISKAFLVALSQHFPSILQSDGDKLITMLLDQFVLNRAPASPKEQRQQNSANSETDTSSSQGSPISTNRYPSGKTEMASPGDEVASHGSNLSSKSSSSVVMNGGSIVWKSGVDQLSFGFSEGSGGANPVFRQQVASFEDESIESLEKQEIAFRLITHILDKVKIDSKLQDQVRFIAKRQLQSMSAFLKSRKRDWNEQGQVLKTRVNAKLSVYQAAAKMKIKSLVSLETDGKTSKRLVLETLALLLDAADACLTSVWRKMKACEELFDSLLSGIAKIAVARGGQPLRVLLIRLKPLVLAVCALPDQGAMLESIFKTSCVIIESAWAKDRAPVDNFIMGLASSIRERNDYEEQVDREKQVPAVQLNVIRLLADLNVAVKKPEVADMILPLFIESLEEGDASTPSFLRLQLLDAVSRIATLGFDKSYRETVVLMTRSYLSKLSSVGSVESKTSAPEATTERVETLPAGFLTIASGLMDTKLRSDYRHRLLSLCSDVGLAAESKSGGSGVDFLGPLLPAVAEICSDFDPTMDVEPSLLKLFRNLWFYIALFGLAPPIVKTPTPPLKSTSNSVNSVGSMSATALQAVGGPYMWDNQWALAVQRIAQGTPPLVVSSVKWLEDELELNALHNPGSRRGNGNEKVASTQRLALSTALGGRVDVAAMNTISGVKATYLLAVAFLEIIRFISNGGILNGESSVSASRSAFSCVFEYLKTPNLTPAVSQCLTAIVHRAFETAVSWLEDRISLTGKDARNRELTTYAHACFLIKSMSQRDEHVRDISVNLLTQLRDKFPQVLWHSSCLDSLLFSVHDNTPSTVVNDPAWTAAVRSLYQKVVREWIIISLSYAPCTSQGLLQDKLCKANTWQRAQTTTDVVSLLSEIKIGTGKNELWSGIRTANIPAVMAAAAAASGANLKVSEAFNLEVLGTGVVSATVKCNHAGEIAGMRRLYNSIGGFQSGSTPSGFGGGLQRLISGAFSQAPQPEDDSFNEMLIARFVRLLQQFVNTAEKGGEVEKSQFRETCSQATALLLSNLGGESKTNVEGFSQLLRLLCWCPAYISTPDAMETGIFIWTWLVSAAPQLVSLVLAELVDAWIWTIDTKRGLFASDVRYSGPAAKLRPHLSPGEPEDPPESDPVDQIVAHRLWLGFLIDRFEVVRHNSAEQLLLLGRMLQRSTDLEWCFTRHPAAAGTFFSLMLLGLKFCSCQTQGNMQKFRSGLQLLEDRIYRTSLGWFAHQPEWYDVNIPNFCHSEALSVSVFVHFLSNELSESSQSDSKGKPRESGNLIDVTDQYHPVWGEMDNYTLGKEKRKQLLLMLCQHEADRLDVWAQPISSKDSPYSRLKISSEKWTEYAKTAFSVDPRIALSVASRFPANASVKSEVTQLVQTNIVDLRTIPEALPYFVTPKNVEENSVLLQQLPHWAACSITQALEFLTPAYKGHPRVMAYVLRVLESYPPERVTFFMPQLVQSLRYDDGRLVEGYLLRATQRSDIFAHILIWHLQGEDVQETPKDGSIDKNAAFQEILPQVRQHIIDGFSPNALDMFTREFDFFDKVTSISGVLFPLPKEERRAGIRRELEKIEMQGDDLYLPTAPNKLVRGIRVDSGIPLQSAAKVPIMITFNVIDRDGDHSDVKPQACIFKVGDDCRQDVLALQVISLLRDIFQAAGLNLYLFPYGVLPTGAERGIIEVVPNTRSRSQMGETTDGGLYEIFQQDYGPVGSTTFETARENFLISSAGYAVASLLLQPKDRHNGNLLFDDVGRLVHIDFGFILETSPGGNMRFESAHFKLSHEMTQLLDPSGVMKSKTWHQFVSLCVKGYLAARRQMDGIISTVQMMLESGLPCFSRGDPIGNLRKRFHPEMSEREAAHFMIHVCTDAYNKWTTAGYDLIQYLQQGIEK.

The segment at 184 to 241 (PASPKEQRQQNSANSETDTSSSQGSPISTNRYPSGKTEMASPGDEVASHGSNLSSKSS) is disordered. A compositionally biased stretch (polar residues) spans 192-215 (QQNSANSETDTSSSQGSPISTNRY). The segment covering 231–241 (SHGSNLSSKSS) has biased composition (low complexity). In terms of domain architecture, PIK helical spans 1483 to 1659 (TEYAKTAFSV…NAAFQEILPQ (177 aa)). A pleckstrin homology (PH) domain conferring phosphoinositide binding specificity region spans residues 1660 to 1773 (VRQHIIDGFS…VKPQACIFKV (114 aa)). The PI3K/PI4K catalytic domain maps to 1734–2012 (VDSGIPLQSA…VCTDAYNKWT (279 aa)). The G-loop stretch occupies residues 1740-1746 (LQSAAKV). The interval 1876 to 1884 (QPKDRHNGN) is catalytic loop. An activation loop region spans residues 1895–1920 (HIDFGFILETSPGGNMRFESAHFKLS).

The protein belongs to the PI3/PI4-kinase family. Type III PI4K subfamily. Interacts in vitro with actin filaments via its PH domain. In terms of tissue distribution, present in leaves and inflorescences.

It is found in the membrane. The protein resides in the cytoplasm. The protein localises to the perinuclear region. It catalyses the reaction a 1,2-diacyl-sn-glycero-3-phospho-(1D-myo-inositol) + ATP = a 1,2-diacyl-sn-glycero-3-phospho-(1D-myo-inositol 4-phosphate) + ADP + H(+). Its activity is regulated as follows. Repressed by PtdIns4P, adenosine and wortmannin, but stimulated by other negatively charged lipids such as PtdIns3P, PtdOH, and phosphatidyl-serine (PtdSer). Acts on phosphatidylinositol (PtdIns) in the first committed step in the production of the second messenger inositol-1,4,5,-trisphosphate. Can bind to phosphatidylinositol 4-monophosphate (PI-4-P or PtdIns4P), phosphatidylinositol 4,5-bisphosphate (PI-4,5-P2 or PtdIns4,5P2), and phosphatidic acid (PtdOH), but not to 3-phosphoinositides. May function upstream of the cold response phosphoinositide-dependent phospholipase C (PI-PLC) pathway. This Arabidopsis thaliana (Mouse-ear cress) protein is Phosphatidylinositol 4-kinase alpha 1.